The following is a 745-amino-acid chain: Elongation factor G, mitochondrial (745 aa).

Residues 40–317 (ERIRNIGISA…AVLDYLPNPG (278 aa)) enclose the tr-type G domain. GTP-binding positions include 49 to 56 (AHIDSGKT), 116 to 120 (DTPGH), and 170 to 173 (NKLD).

The protein belongs to the TRAFAC class translation factor GTPase superfamily. Classic translation factor GTPase family. EF-G/EF-2 subfamily.

Its subcellular location is the mitochondrion. It functions in the pathway protein biosynthesis; polypeptide chain elongation. In terms of biological role, mitochondrial GTPase that catalyzes the GTP-dependent ribosomal translocation step during translation elongation. During this step, the ribosome changes from the pre-translocational (PRE) to the post-translocational (POST) state as the newly formed A-site-bound peptidyl-tRNA and P-site-bound deacylated tRNA move to the P and E sites, respectively. Catalyzes the coordinated movement of the two tRNA molecules, the mRNA and conformational changes in the ribosome. Essential during development as it acts as a retrograde signal from mitochondria to the nucleus to slow down cell proliferation if mitochondrial energy output is low. The protein is Elongation factor G, mitochondrial of Drosophila erecta (Fruit fly).